A 482-amino-acid chain; its full sequence is MPEFTVTEISGEVKRTLEGSFGRIRVRGEVGRVFQARSGHLYYDIKDDRNVLACTTWKGQVASLSVVPEEGLEVVVTGRLTAFGAQSKYNLNVDEVAVAGQGALMALLEKRKKQLEAEGLFAPERKRPLPYLPQIIGVITSPQGAVIRDILHRLRDRFPRKVLIWPVAVQGANCAPEVARAIEGFNMFSPGGALPRPDLLIVARGGGSIEDLWGFNEEIVARAAAASQIPLISAVGHETDTTLIDFVSDRRAPTPTAAAEMAVPVRLELLAWTGEQGARLSRAASDAVQRRAQRLRDLSRALPRPDSLLDTPRQRLDRAAERLPAALTQGVQRRRLRLAELSAPLRPASLRALVSARRDHLAHLGSRLSPRALEREIAAQGERLTRLSDRLNSAQTTRIERLRQRLESADRLRETLGYKATLARGYAVVRDDQGALLTTRAQAAKAAALQIEFADGTLDTGGAPAKPASKPKQKPPEQGSLF.

The segment at 457 to 482 (TLDTGGAPAKPASKPKQKPPEQGSLF) is disordered.

It belongs to the XseA family. In terms of assembly, heterooligomer composed of large and small subunits.

Its subcellular location is the cytoplasm. The enzyme catalyses Exonucleolytic cleavage in either 5'- to 3'- or 3'- to 5'-direction to yield nucleoside 5'-phosphates.. Functionally, bidirectionally degrades single-stranded DNA into large acid-insoluble oligonucleotides, which are then degraded further into small acid-soluble oligonucleotides. The protein is Exodeoxyribonuclease 7 large subunit of Ruegeria pomeroyi (strain ATCC 700808 / DSM 15171 / DSS-3) (Silicibacter pomeroyi).